We begin with the raw amino-acid sequence, 397 residues long: DnaJ homolog subfamily A member 4 (397 aa).

Residues 4–70 enclose the J domain; it reads ETQYYDILGV…RDIYDQGGEQ (67 aa). At Ser-18 the chain carries Phosphoserine. Residues 122–206 form a CR-type zinc finger; it reads GITKKLALQK…CSGAKVTREK (85 aa). Cys-135, Cys-138, Cys-151, Cys-154, Cys-178, Cys-181, Cys-194, and Cys-197 together coordinate Zn(2+). CXXCXGXG motif repeat units follow at residues 135–142, 151–158, 178–185, and 194–201; these read CEKCEGIG, CPLCKGRG, CIECKGQG, and CENCSGAK. The span at 366–380 shows a compositional bias: basic and acidic residues; sequence EFNPNEQSWRQHREA. The tract at residues 366–397 is disordered; sequence EFNPNEQSWRQHREAYEEDDEEPRAGVQCQTA. Residue Cys-394 is modified to Cysteine methyl ester. Residue Cys-394 is the site of S-farnesyl cysteine attachment. A propeptide spans 395–397 (removed in mature form); the sequence is QTA.

As to expression, specifically expressed in testis and heart.

The protein resides in the membrane. In Mus musculus (Mouse), this protein is DnaJ homolog subfamily A member 4 (Dnaja4).